Consider the following 58-residue polypeptide: Small ribosomal subunit protein bS21 (58 aa).

It belongs to the bacterial ribosomal protein bS21 family.

This is Small ribosomal subunit protein bS21 from Synechococcus sp. (strain CC9605).